The following is a 361-amino-acid chain: Probable cysteine protease RD19B (361 aa).

Residues 1 to 24 (MDYHLRVLFSVSLIFVFVSVSVCG) form the signal peptide. The propeptide at 25-131 (DEDVLIRQVV…NQAPILPTQN (107 aa)) is activation peptide. Cystine bridges form between Cys153–Cys203 and Cys187–Cys237. Residue Cys156 is part of the active site. An N-linked (GlcNAc...) asparagine glycan is attached at Asn250. The cysteines at positions 293 and 347 are disulfide-linked. Catalysis depends on residues His299 and Asn326.

The protein belongs to the peptidase C1 family.

The protein resides in the lytic vacuole. Probable thiol protease. The sequence is that of Probable cysteine protease RD19B from Arabidopsis thaliana (Mouse-ear cress).